A 67-amino-acid chain; its full sequence is ATP synthase F(0) complex subunit 8 (67 aa).

The helical transmembrane segment at 8-24 threads the bilayer; it reads TWFITILSMLITLFILF. Lysine 54 is subject to N6-acetyllysine; alternate. Position 54 is an N6-succinyllysine; alternate (lysine 54). Lysine 57 carries the post-translational modification N6-acetyllysine.

It belongs to the ATPase protein 8 family. As to quaternary structure, component of the ATP synthase complex composed at least of ATP5F1A/subunit alpha, ATP5F1B/subunit beta, ATP5MC1/subunit c (homooctomer), MT-ATP6/subunit a, MT-ATP8/subunit 8, ATP5ME/subunit e, ATP5MF/subunit f, ATP5MG/subunit g, ATP5MK/subunit k, ATP5MJ/subunit j, ATP5F1C/subunit gamma, ATP5F1D/subunit delta, ATP5F1E/subunit epsilon, ATP5PF/subunit F6, ATP5PB/subunit b, ATP5PD/subunit d, ATP5PO/subunit OSCP. ATP synthase complex consists of a soluble F(1) head domain (subunits alpha(3) and beta(3)) - the catalytic core - and a membrane F(0) domain - the membrane proton channel (subunits c, a, 8, e, f, g, k and j). These two domains are linked by a central stalk (subunits gamma, delta, and epsilon) rotating inside the F1 region and a stationary peripheral stalk (subunits F6, b, d, and OSCP). Interacts with PRICKLE3.

Its subcellular location is the mitochondrion membrane. Its function is as follows. Subunit 8, of the mitochondrial membrane ATP synthase complex (F(1)F(0) ATP synthase or Complex V) that produces ATP from ADP in the presence of a proton gradient across the membrane which is generated by electron transport complexes of the respiratory chain. ATP synthase complex consist of a soluble F(1) head domain - the catalytic core - and a membrane F(1) domain - the membrane proton channel. These two domains are linked by a central stalk rotating inside the F(1) region and a stationary peripheral stalk. During catalysis, ATP synthesis in the catalytic domain of F(1) is coupled via a rotary mechanism of the central stalk subunits to proton translocation. In vivo, can only synthesize ATP although its ATP hydrolase activity can be activated artificially in vitro. Part of the complex F(0) domain. The polypeptide is ATP synthase F(0) complex subunit 8 (Dugong dugon (Dugong)).